The chain runs to 164 residues: tRNA (cytidine(34)-2'-O)-methyltransferase (164 aa).

The S-adenosyl-L-methionine site is built by M80, G102, V124, and S132.

This sequence belongs to the class IV-like SAM-binding methyltransferase superfamily. RNA methyltransferase TrmH family. TrmL subfamily. As to quaternary structure, homodimer.

Its subcellular location is the cytoplasm. It carries out the reaction cytidine(34) in tRNA + S-adenosyl-L-methionine = 2'-O-methylcytidine(34) in tRNA + S-adenosyl-L-homocysteine + H(+). It catalyses the reaction 5-carboxymethylaminomethyluridine(34) in tRNA(Leu) + S-adenosyl-L-methionine = 5-carboxymethylaminomethyl-2'-O-methyluridine(34) in tRNA(Leu) + S-adenosyl-L-homocysteine + H(+). Functionally, methylates the ribose at the nucleotide 34 wobble position in the two leucyl isoacceptors tRNA(Leu)(CmAA) and tRNA(Leu)(cmnm5UmAA). Catalyzes the methyl transfer from S-adenosyl-L-methionine to the 2'-OH of the wobble nucleotide. This Polaromonas sp. (strain JS666 / ATCC BAA-500) protein is tRNA (cytidine(34)-2'-O)-methyltransferase.